We begin with the raw amino-acid sequence, 94 residues long: Alpha-galactosyl-binding lectin (94 aa).

As to quaternary structure, homodimer. Contains three disulfide bonds.

Functionally, alpha-galactosyl-binding lectin with preference for galactose-alpha-1,4-galactose. The sequence is that of Alpha-galactosyl-binding lectin from Lyophyllum decastes (Fried chicken mushroom).